The sequence spans 152 residues: Ribosome maturation factor RimP (152 aa).

It belongs to the RimP family.

It localises to the cytoplasm. Its function is as follows. Required for maturation of 30S ribosomal subunits. The polypeptide is Ribosome maturation factor RimP (Teredinibacter turnerae (strain ATCC 39867 / T7901)).